Here is a 534-residue protein sequence, read N- to C-terminus: Cytochrome P450 monooxygenase ascG (534 aa).

Residues 13-33 (FVASFPALSAAAGLIVAISFI) form a helical membrane-spanning segment. The N-linked (GlcNAc...) asparagine glycan is linked to Asn466. Heme is bound at residue Cys469.

The protein belongs to the cytochrome P450 family. Requires heme as cofactor.

It localises to the membrane. The catalysed reaction is ilicicolin C + NADPH + O2 + H(+) = ascochlorin + NADP(+) + 2 H2O. Its pathway is secondary metabolite biosynthesis; terpenoid biosynthesis. Functionally, cytochrome P450 monooxygenase; part of the asc-1 gene cluster that mediates the biosynthesis of both ascochlorin and ascofuranone, a strong inhibitor of cyanide-insensitive alternative oxidases and a promising drug candidate against African trypanosomiasis. The first step in the pathway is performed by the non-reducing polyketide synthase ascC that produces orsellinic acid by condensing acetyl-CoA with 3 malonyl-CoA units. Orsellinic acid is then prenylated by the prenyltransferase ascA to yield ilicicolinic acid B. Ilicicolinic acid B is further reduced to ilicicolin B by the reductase ascB. The halogenase ascD then chlorinates ilicicolin B to produce ilicicolin A which is converted to ilicicolin A epoxide by the cytochrome P450 monooxygenase ascE that catalyzes stereoselective epoxidation of the terminal double bond of the prenyl group. Ilicicolin A epoxide is the last common precursor for the biosynthesis of ascofuranone and ascochlorin. The terpene cyclase ascF produces a monocyclic terpene, and the cyclization reaction is proposed to be initiated by protonation of the terminal epoxide of ilicicolin A epoxide to generate a monocyclic tertiarycation, which is followed by a series of hydride and methyl shifts with abstraction of proton, leading to the formation of the (14S,15R,19R)-trimethylcyclohexanone ring structure of ilicicolin C, which is finally reduced to ascochlorin by the dehydrogenase ascG. On the other hand, ilicicolin A epoxide is hydroxylated by the cytochrome P450 monooxygenase ascH, and the resultant product is cyclized by the terpene cyclase ascI to ascofuranol via protonation-initiated epoxide ring opening, which facilitates the 6-endo-tet cyclization to form the tetrahy-drofuran ring. Finally, ascofuranol is oxidized into ascofuranone by ascJ. The chain is Cytochrome P450 monooxygenase ascG from Acremonium egyptiacum (Oospora egyptiaca).